A 395-amino-acid chain; its full sequence is ATP phosphoribosyltransferase regulatory subunit (395 aa).

Belongs to the class-II aminoacyl-tRNA synthetase family. HisZ subfamily. Heteromultimer composed of HisG and HisZ subunits.

The protein localises to the cytoplasm. It participates in amino-acid biosynthesis; L-histidine biosynthesis; L-histidine from 5-phospho-alpha-D-ribose 1-diphosphate: step 1/9. Functionally, required for the first step of histidine biosynthesis. May allow the feedback regulation of ATP phosphoribosyltransferase activity by histidine. The polypeptide is ATP phosphoribosyltransferase regulatory subunit (Azotobacter vinelandii (strain DJ / ATCC BAA-1303)).